A 213-amino-acid polypeptide reads, in one-letter code: Pyrrolidone-carboxylate peptidase (213 aa).

Residues Glu-81, Cys-144, and His-166 contribute to the active site.

The protein belongs to the peptidase C15 family. As to quaternary structure, homotetramer.

The protein resides in the cytoplasm. It carries out the reaction Release of an N-terminal pyroglutamyl group from a polypeptide, the second amino acid generally not being Pro.. Its function is as follows. Removes 5-oxoproline from various penultimate amino acid residues except L-proline. The polypeptide is Pyrrolidone-carboxylate peptidase (Pseudomonas fluorescens (strain SBW25)).